Reading from the N-terminus, the 160-residue chain is uncharacterized protein (160 aa).

3 consecutive C2H2-type zinc fingers follow at residues 10 to 32 (LSCL…LPTH), 41 to 64 (QTCD…KRYH), and 75 to 98 (FQCQ…KIEH). Phosphotyrosine is present on Tyr-115. Ser-116 carries the phosphoserine modification.

The protein resides in the nucleus. Functionally, may be involved in transcriptional regulation. This is an uncharacterized protein from Drosophila melanogaster (Fruit fly).